The sequence spans 444 residues: Platelet-activating factor acetylhydrolase (444 aa).

The signal sequence occupies residues 1 to 21 (MLPSKLHALFCLCTCLALVYP). Residues asparagine 60 and asparagine 200 are each glycosylated (N-linked (GlcNAc...) asparagine). Serine 274 acts as the Nucleophile in catalysis. Catalysis depends on charge relay system residues aspartate 297 and histidine 352. Residues asparagine 424 and asparagine 434 are each glycosylated (N-linked (GlcNAc...) asparagine).

It belongs to the AB hydrolase superfamily. Lipase family. Post-translationally, N-glycosylated. As to expression, plasma.

Its subcellular location is the secreted. The protein localises to the extracellular space. The enzyme catalyses a 1-O-alkyl-2-acetyl-sn-glycero-3-phosphocholine + H2O = a 1-O-alkyl-sn-glycero-3-phosphocholine + acetate + H(+). The catalysed reaction is 1-O-decyl-2-acetyl-sn-glycero-3-phosphocholine + H2O = 1-O-decyl-sn-glycero-3-phosphocholine + acetate + H(+). It carries out the reaction 1-O-dodecyl-2-acetyl-sn-glycero-3-phosphocholine + H2O = 1-O-dodecyl-sn-glycero-3-phosphocholine + acetate + H(+). It catalyses the reaction 1-O-tetradecyl-2-acetyl-sn-glycero-3-phosphocholine + H2O = 1-O-tetradecyl-sn-glycero-3-phosphocholine + acetate + H(+). The enzyme catalyses 1-O-hexadecyl-2-acetyl-sn-glycero-3-phosphocholine + H2O = 1-O-hexadecyl-sn-glycero-3-phosphocholine + acetate + H(+). The catalysed reaction is 1-O-octadecyl-2-acetyl-sn-glycero-3-phosphocholine + H2O = 1-O-octadecyl-sn-glycero-3-phosphocholine + acetate + H(+). It carries out the reaction 1-hexadecanoyl-2-acetyl-sn-glycero-3-phosphocholine + H2O = 1-hexadecanoyl-sn-glycero-3-phosphocholine + acetate + H(+). It catalyses the reaction 1-hexadecanoyl-2-propionyl-sn-glycero-3-phosphocholine + H2O = propanoate + 1-hexadecanoyl-sn-glycero-3-phosphocholine + H(+). The enzyme catalyses 1-hexadecanoyl-2-butanoyl-sn-glycero-3-phosphocholine + H2O = butanoate + 1-hexadecanoyl-sn-glycero-3-phosphocholine + H(+). The catalysed reaction is 1-hexadecanoyl-2-pentanoyl-sn-glycero-3-phosphocholine + H2O = pentanoate + 1-hexadecanoyl-sn-glycero-3-phosphocholine + H(+). It carries out the reaction 1-hexadecanoyl-2-glutaroyl-sn-glycero-3-phosphocholine + H2O = glutarate + 1-hexadecanoyl-sn-glycero-3-phosphocholine + H(+). It catalyses the reaction 1-hexadecanoyl-2-(5-oxopentanoyl)-sn-glycero-3-phosphocholine + H2O = 5-oxopentanoate + 1-hexadecanoyl-sn-glycero-3-phosphocholine + H(+). The enzyme catalyses 1-hexadecanoyl-2-(9-oxononanoyl)-sn-glycero-3-phosphocholine + H2O = 9-oxononanoate + 1-hexadecanoyl-sn-glycero-3-phosphocholine + H(+). The catalysed reaction is 1-hexadecanoyl-2-[9-hydroperoxy-(10E-octadecenoyl)]-sn-glycero-3-phosphocholine + H2O = 9-hydroperoxy-10E-octadecenoate + 1-hexadecanoyl-sn-glycero-3-phosphocholine + H(+). It carries out the reaction 1-hexadecanoyl-2-(10-hydroperoxy-8E-octadecenoyl)-sn-glycero-3-phosphocholine + H2O = 10-hydroperoxy-(8E)-octadecenoate + 1-hexadecanoyl-sn-glycero-3-phosphocholine + H(+). Its function is as follows. Lipoprotein-associated calcium-independent phospholipase A2 involved in phospholipid catabolism during inflammatory and oxidative stress response. At the lipid-aqueous interface, hydrolyzes the ester bond of fatty acyl group attached at sn-2 position of phospholipids (phospholipase A2 activity). Specifically targets phospholipids with a short-chain fatty acyl group at sn-2 position. Can hydrolyze phospholipids with long fatty acyl chains, only if they carry oxidized functional groups. Hydrolyzes and inactivates platelet-activating factor (PAF, 1-O-alkyl-2-acetyl-sn-glycero-3-phosphocholine), a potent pro-inflammatory signaling lipid that acts through PTAFR on various innate immune cells. Hydrolyzes oxidatively truncated phospholipids carrying an aldehyde group at omega position, preventing their accumulation in low-density lipoprotein (LDL) particles and uncontrolled pro-inflammatory effects. As part of high-density lipoprotein (HDL) particles, can hydrolyze phospholipids having long-chain fatty acyl hydroperoxides at sn-2 position and protect against potential accumulation of these oxylipins in the vascular wall. Catalyzes the release from membrane phospholipids of F2-isoprostanes, lipid biomarkers of cellular oxidative damage. The protein is Platelet-activating factor acetylhydrolase (PLA2G7) of Bos taurus (Bovine).